We begin with the raw amino-acid sequence, 222 residues long: Deoxyribose-phosphate aldolase (222 aa).

Aspartate 93 acts as the Proton donor/acceptor in catalysis. Lysine 156 serves as the catalytic Schiff-base intermediate with acetaldehyde. Lysine 186 (proton donor/acceptor) is an active-site residue.

This sequence belongs to the DeoC/FbaB aldolase family. DeoC type 1 subfamily.

The protein localises to the cytoplasm. It catalyses the reaction 2-deoxy-D-ribose 5-phosphate = D-glyceraldehyde 3-phosphate + acetaldehyde. Its pathway is carbohydrate degradation; 2-deoxy-D-ribose 1-phosphate degradation; D-glyceraldehyde 3-phosphate and acetaldehyde from 2-deoxy-alpha-D-ribose 1-phosphate: step 2/2. Catalyzes a reversible aldol reaction between acetaldehyde and D-glyceraldehyde 3-phosphate to generate 2-deoxy-D-ribose 5-phosphate. This Corynebacterium glutamicum (strain ATCC 13032 / DSM 20300 / JCM 1318 / BCRC 11384 / CCUG 27702 / LMG 3730 / NBRC 12168 / NCIMB 10025 / NRRL B-2784 / 534) protein is Deoxyribose-phosphate aldolase.